Here is a 271-residue protein sequence, read N- to C-terminus: Uridine-cytidine kinase 1-B (271 aa).

24–32 (GGTASGKST) is an ATP binding site. Residues D81, Y109, H114, R163, R172, and Q180 each contribute to the substrate site. D209 contributes to the ATP binding site. The tract at residues 240–271 (RSQKRTLPGQGDSGGLLLQGKRTHLESSSRPH) is disordered. A compositionally biased stretch (low complexity) spans 246–259 (LPGQGDSGGLLLQG). The span at 262-271 (THLESSSRPH) shows a compositional bias: basic and acidic residues.

Belongs to the uridine kinase family.

It catalyses the reaction uridine + ATP = UMP + ADP + H(+). It carries out the reaction cytidine + ATP = CMP + ADP + H(+). It functions in the pathway pyrimidine metabolism; CTP biosynthesis via salvage pathway; CTP from cytidine: step 1/3. The protein operates within pyrimidine metabolism; UMP biosynthesis via salvage pathway; UMP from uridine: step 1/1. In terms of biological role, phosphorylates uridine and cytidine to uridine monophosphate and cytidine monophosphate. Does not phosphorylate deoxyribonucleosides or purine ribonucleosides. Can use ATP or GTP as a phosphate donor. The protein is Uridine-cytidine kinase 1-B (uck1-b) of Xenopus laevis (African clawed frog).